We begin with the raw amino-acid sequence, 394 residues long: Elongation factor Tu 1 (394 aa).

The region spanning 10 to 204 (KPHVNVGTIG…HLDTYIPEPE (195 aa)) is the tr-type G domain. The G1 stretch occupies residues 19–26 (GHVDHGKT). Position 19–26 (19–26 (GHVDHGKT)) interacts with GTP. Residue T26 participates in Mg(2+) binding. The G2 stretch occupies residues 60-64 (GITIN). A G3 region spans residues 81–84 (DCPG). Residues 81 to 85 (DCPGH) and 136 to 139 (NKCD) contribute to the GTP site. Residues 136-139 (NKCD) form a G4 region. Residues 174–176 (SAL) are G5.

Belongs to the TRAFAC class translation factor GTPase superfamily. Classic translation factor GTPase family. EF-Tu/EF-1A subfamily. In terms of assembly, monomer.

The protein localises to the cytoplasm. The catalysed reaction is GTP + H2O = GDP + phosphate + H(+). Functionally, GTP hydrolase that promotes the GTP-dependent binding of aminoacyl-tRNA to the A-site of ribosomes during protein biosynthesis. The sequence is that of Elongation factor Tu 1 from Haemophilus influenzae (strain 86-028NP).